The sequence spans 217 residues: Ras-related protein RIC2 (217 aa).

GTP contacts are provided by residues 21 to 28, 69 to 73, and 127 to 130; these read GDSGVGKS, DTAGQ, and NKSD. Residues Cys214 and Cys215 are each lipidated (S-geranylgeranyl cysteine).

It belongs to the small GTPase superfamily. Rab family.

It is found in the cell membrane. In terms of biological role, possesses GTPase activity. This Oryza sativa subsp. japonica (Rice) protein is Ras-related protein RIC2 (RIC2).